The primary structure comprises 97 residues: NADH-ubiquinone oxidoreductase chain 4L (97 aa).

The next 3 helical transmembrane spans lie at 1 to 21, 25 to 45, and 57 to 77; these read MSYLILSIVILLIGILGIILN, LIIMLMCVELVLLASTILLLF, and IFAIVILTVAAAESAIGLAIM.

The protein belongs to the complex I subunit 4L family.

The protein localises to the mitochondrion membrane. The catalysed reaction is a ubiquinone + NADH + 5 H(+)(in) = a ubiquinol + NAD(+) + 4 H(+)(out). Core subunit of the mitochondrial membrane respiratory chain NADH dehydrogenase (Complex I) that is believed to belong to the minimal assembly required for catalysis. Complex I functions in the transfer of electrons from NADH to the respiratory chain. The immediate electron acceptor for the enzyme is believed to be ubiquinone. This chain is NADH-ubiquinone oxidoreductase chain 4L (ND4L), found in Sarcophyton glaucum (Toadstool umbrella leather coral).